The following is an 877-amino-acid chain: Leucine--tRNA ligase (877 aa).

Residues 43 to 53 (PYPSGRIHMGH) carry the 'HIGH' region motif. The 'KMSKS' region motif lies at 628–632 (KMSKS). Lys-631 contacts ATP.

Belongs to the class-I aminoacyl-tRNA synthetase family.

It localises to the cytoplasm. The enzyme catalyses tRNA(Leu) + L-leucine + ATP = L-leucyl-tRNA(Leu) + AMP + diphosphate. In Brucella canis (strain ATCC 23365 / NCTC 10854 / RM-666), this protein is Leucine--tRNA ligase.